The chain runs to 479 residues: Sulfate adenylyltransferase subunit 1 (479 aa).

One can recognise a tr-type G domain in the interval 25 to 239; sequence KSLLRFLTCG…EVLETVDIQR (215 aa). Residues 34–41 form a G1 region; sequence GSVDDGKS. GTP is bound at residue 34-41; sequence GSVDDGKS. The G2 stretch occupies residues 92-96; it reads GITID. The segment at 113–116 is G3; sequence DTPG. GTP contacts are provided by residues 113–117 and 168–171; these read DTPGH and NKMD. Residues 168-171 form a G4 region; it reads NKMD. Positions 206–208 are G5; that stretch reads SAL.

Belongs to the TRAFAC class translation factor GTPase superfamily. Classic translation factor GTPase family. CysN/NodQ subfamily. Heterodimer composed of CysD, the smaller subunit, and CysN.

The catalysed reaction is sulfate + ATP + H(+) = adenosine 5'-phosphosulfate + diphosphate. It functions in the pathway sulfur metabolism; hydrogen sulfide biosynthesis; sulfite from sulfate: step 1/3. Its function is as follows. With CysD forms the ATP sulfurylase (ATPS) that catalyzes the adenylation of sulfate producing adenosine 5'-phosphosulfate (APS) and diphosphate, the first enzymatic step in sulfur assimilation pathway. APS synthesis involves the formation of a high-energy phosphoric-sulfuric acid anhydride bond driven by GTP hydrolysis by CysN coupled to ATP hydrolysis by CysD. The polypeptide is Sulfate adenylyltransferase subunit 1 (Salmonella newport (strain SL254)).